A 344-amino-acid polypeptide reads, in one-letter code: Ribosomal RNA small subunit methyltransferase H 2 (344 aa).

S-adenosyl-L-methionine is bound by residues Gly78–His80, Asp98, Phe131, Asp145, and Gln152.

Belongs to the methyltransferase superfamily. RsmH family.

The protein resides in the cytoplasm. It carries out the reaction cytidine(1402) in 16S rRNA + S-adenosyl-L-methionine = N(4)-methylcytidine(1402) in 16S rRNA + S-adenosyl-L-homocysteine + H(+). Functionally, specifically methylates the N4 position of cytidine in position 1402 (C1402) of 16S rRNA. The chain is Ribosomal RNA small subunit methyltransferase H 2 from Acholeplasma laidlawii (strain PG-8A).